Here is a 550-residue protein sequence, read N- to C-terminus: Membrane protein insertase YidC (550 aa).

The chain crosses the membrane as a helical span at residues Asn6 to Asp26. Disordered stretches follow at residues Ala28–Ala54 and Gln111–Tyr132. Residues Lys30–Val52 show a composition bias toward low complexity. A compositionally biased stretch (polar residues) spans Gln111 to Lys127. The next 4 helical transmembrane spans lie at Lys346 to Val366, Leu421 to Leu441, Leu459 to Ile479, and Pro500 to Val520.

Belongs to the OXA1/ALB3/YidC family. Type 1 subfamily. As to quaternary structure, interacts with the Sec translocase complex via SecD. Specifically interacts with transmembrane segments of nascent integral membrane proteins during membrane integration.

It localises to the cell inner membrane. Its function is as follows. Required for the insertion and/or proper folding and/or complex formation of integral membrane proteins into the membrane. Involved in integration of membrane proteins that insert both dependently and independently of the Sec translocase complex, as well as at least some lipoproteins. Aids folding of multispanning membrane proteins. The sequence is that of Membrane protein insertase YidC from Cronobacter sakazakii (strain ATCC BAA-894) (Enterobacter sakazakii).